The primary structure comprises 2636 residues: Ankyrin repeat and KH domain-containing protein CBG24701 (2636 aa).

ANK repeat units lie at residues Ser-252–Ala-281, Asn-286–Val-317, Asn-361–Gln-390, Asn-435–Glu-464, His-468–Ala-500, Ser-505–Thr-534, Lys-536–Gln-564, Gln-566–Phe-595, Asp-598–Phe-627, Asn-632–Leu-661, and Asp-665–Leu-695. Disordered regions lie at residues Pro-994–Glu-1030, Lys-1172–Lys-1191, and Asn-1230–Lys-1268. Positions Gln-1006–Glu-1030 are enriched in polar residues. Low complexity predominate over residues Gln-1233–Gln-1245. Positions Thr-1249 to Lys-1260 are enriched in basic and acidic residues. ANK repeat units follow at residues Thr-1273–His-1302, Lys-1306–Ala-1335, Thr-1340–His-1369, Ser-1373–Ser-1402, Leu-1408–Ala-1437, Tyr-1447–His-1476, Thr-1480–Ala-1509, Thr-1515–Asn-1546, Lys-1548–Met-1577, and Arg-1581–Asn-1610. A coiled-coil region spans residues Arg-1638 to Ala-1696. Residues Lys-1669–Trp-1857 are disordered. The span at Lys-1670–Lys-1686 shows a compositional bias: basic residues. The segment covering Pro-1698–Glu-1708 has biased composition (pro residues). A compositionally biased stretch (acidic residues) spans Pro-1709–Ala-1722. Positions Asp-1811 to Arg-1829 are enriched in basic and acidic residues. The span at Ala-1832 to Ser-1851 shows a compositional bias: polar residues. Residues Val-1864–Ile-1929 enclose the KH domain. Disordered stretches follow at residues Ser-1980–Ser-2182, Phe-2196–Ser-2221, Asn-2269–Phe-2292, Ser-2301–Leu-2320, Ser-2352–Gln-2417, Met-2444–Tyr-2465, and Gly-2539–Met-2636. Residues Ser-1994 to Thr-2008 are compositionally biased toward polar residues. Residues Thr-2025 to Pro-2045 show a composition bias toward low complexity. Polar residues predominate over residues Ser-2057–Gln-2083. Composition is skewed to low complexity over residues Gln-2099–Gln-2119 and Gln-2139–Gln-2148. Positions Pro-2167–Ser-2179 are enriched in pro residues. Residues Asn-2269 to Thr-2280 are compositionally biased toward low complexity. The span at Lys-2281 to Phe-2292 shows a compositional bias: polar residues. Composition is skewed to low complexity over residues Gln-2361 to Pro-2373 and Pro-2391 to Gln-2417. Composition is skewed to polar residues over residues Asn-2449–Tyr-2465, Arg-2565–Arg-2574, and Gln-2583–Asp-2595. Residues Arg-2599 to Gln-2615 are compositionally biased toward low complexity. Residues Asn-2616–Met-2636 show a composition bias toward polar residues.

The protein belongs to the mask family.

It is found in the cytoplasm. The protein is Ankyrin repeat and KH domain-containing protein CBG24701 of Caenorhabditis briggsae.